Here is a 472-residue protein sequence, read N- to C-terminus: Adenosylhomocysteinase (472 aa).

Positions 61, 136, and 196 each coordinate substrate. 197 to 199 contributes to the NAD(+) binding site; that stretch reads TTT. 2 residues coordinate substrate: Lys226 and Asp230. Residues Asn231, 260–265, Glu283, Asn318, 339–341, and Asn384 each bind NAD(+); these read GYGDVG and IGH.

This sequence belongs to the adenosylhomocysteinase family. NAD(+) serves as cofactor.

Its subcellular location is the cytoplasm. It catalyses the reaction S-adenosyl-L-homocysteine + H2O = L-homocysteine + adenosine. It functions in the pathway amino-acid biosynthesis; L-homocysteine biosynthesis; L-homocysteine from S-adenosyl-L-homocysteine: step 1/1. May play a key role in the regulation of the intracellular concentration of adenosylhomocysteine. This Cupriavidus pinatubonensis (strain JMP 134 / LMG 1197) (Cupriavidus necator (strain JMP 134)) protein is Adenosylhomocysteinase.